The chain runs to 177 residues: Large ribosomal subunit protein uL6 (177 aa).

The protein belongs to the universal ribosomal protein uL6 family. In terms of assembly, part of the 50S ribosomal subunit.

In terms of biological role, this protein binds to the 23S rRNA, and is important in its secondary structure. It is located near the subunit interface in the base of the L7/L12 stalk, and near the tRNA binding site of the peptidyltransferase center. This Shewanella frigidimarina (strain NCIMB 400) protein is Large ribosomal subunit protein uL6.